We begin with the raw amino-acid sequence, 240 residues long: Pyridoxine 5'-phosphate synthase (240 aa).

3-amino-2-oxopropyl phosphate is bound at residue asparagine 7. 1-deoxy-D-xylulose 5-phosphate is bound at residue 9–10 (DH). Arginine 18 serves as a coordination point for 3-amino-2-oxopropyl phosphate. Histidine 43 serves as the catalytic Proton acceptor. 1-deoxy-D-xylulose 5-phosphate is bound by residues arginine 45 and histidine 50. Glutamate 70 functions as the Proton acceptor in the catalytic mechanism. Threonine 100 contributes to the 1-deoxy-D-xylulose 5-phosphate binding site. Histidine 191 serves as the catalytic Proton donor. 3-amino-2-oxopropyl phosphate is bound by residues glycine 192 and 213–214 (GH).

This sequence belongs to the PNP synthase family. As to quaternary structure, homooctamer; tetramer of dimers.

It localises to the cytoplasm. The catalysed reaction is 3-amino-2-oxopropyl phosphate + 1-deoxy-D-xylulose 5-phosphate = pyridoxine 5'-phosphate + phosphate + 2 H2O + H(+). Its pathway is cofactor biosynthesis; pyridoxine 5'-phosphate biosynthesis; pyridoxine 5'-phosphate from D-erythrose 4-phosphate: step 5/5. Functionally, catalyzes the complicated ring closure reaction between the two acyclic compounds 1-deoxy-D-xylulose-5-phosphate (DXP) and 3-amino-2-oxopropyl phosphate (1-amino-acetone-3-phosphate or AAP) to form pyridoxine 5'-phosphate (PNP) and inorganic phosphate. This is Pyridoxine 5'-phosphate synthase from Acaryochloris marina (strain MBIC 11017).